We begin with the raw amino-acid sequence, 106 residues long: Large ribosomal subunit protein P2A (106 aa).

K2 is covalently cross-linked (Glycyl lysine isopeptide (Lys-Gly) (interchain with G-Cter in ubiquitin)). T16 is modified (phosphothreonine). Residues S40 and S43 each carry the phosphoserine modification. Residue K48 forms a Glycyl lysine isopeptide (Lys-Gly) (interchain with G-Cter in ubiquitin) linkage. The residue at position 49 (S49) is a Phosphoserine. Residues 65 to 82 (PAAGPASAGGAAAASGDA) show a composition bias toward low complexity. The interval 65 to 106 (PAAGPASAGGAAAASGDAAAEEEKEEEAAEESDDDMGFGLFD) is disordered. A compositionally biased stretch (acidic residues) spans 83-100 (AAEEEKEEEAAEESDDDM). Residue S96 is modified to Phosphoserine.

It belongs to the eukaryotic ribosomal protein P1/P2 family. In terms of assembly, component of the large ribosomal subunit (LSU). Mature yeast ribosomes consist of a small (40S) and a large (60S) subunit. The 40S small subunit contains 1 molecule of ribosomal RNA (18S rRNA) and 33 different proteins (encoded by 57 genes). The large 60S subunit contains 3 rRNA molecules (25S, 5.8S and 5S rRNA) and 46 different proteins (encoded by 81 genes). The 5 acidic ribosomal P-proteins form the stalk structure of the 60S subunit. They are organized as a pentameric complex in which uL10/P0 interacts with 2 heterodimers, P1A-P2B and P1B-P2A. Post-translationally, phosphorylation is not involved in the interaction of the acidic P proteins with the ribosome, however it is suggested to affect the ribosome activity and to participate in a possible ribosome regulatory mechanism. In terms of processing, the N-terminus is not modified.

It localises to the cytoplasm. Its function is as follows. Component of the ribosome, a large ribonucleoprotein complex responsible for the synthesis of proteins in the cell. The small ribosomal subunit (SSU) binds messenger RNAs (mRNAs) and translates the encoded message by selecting cognate aminoacyl-transfer RNA (tRNA) molecules. The large subunit (LSU) contains the ribosomal catalytic site termed the peptidyl transferase center (PTC), which catalyzes the formation of peptide bonds, thereby polymerizing the amino acids delivered by tRNAs into a polypeptide chain. The nascent polypeptides leave the ribosome through a tunnel in the LSU and interact with protein factors that function in enzymatic processing, targeting, and the membrane insertion of nascent chains at the exit of the ribosomal tunnel. In Saccharomyces cerevisiae (strain ATCC 204508 / S288c) (Baker's yeast), this protein is Large ribosomal subunit protein P2A.